Reading from the N-terminus, the 47-residue chain is Delta-actitoxin-Axm1g (47 aa).

Cystine bridges form between Cys4–Cys44, Cys6–Cys34, and Cys27–Cys45.

Belongs to the sea anemone sodium channel inhibitory toxin family. Type I subfamily.

The protein resides in the secreted. Its subcellular location is the nematocyst. This is Delta-actitoxin-Axm1g from Anthopleura xanthogrammica (Giant green sea anemone).